Here is a 331-residue protein sequence, read N- to C-terminus: Probable allantoicase (331 aa).

The protein belongs to the allantoicase family.

It carries out the reaction allantoate + H2O = (S)-ureidoglycolate + urea. It functions in the pathway nitrogen metabolism; (S)-allantoin degradation; (S)-ureidoglycolate from allantoate (aminidohydrolase route): step 1/1. The sequence is that of Probable allantoicase from Pseudomonas fluorescens (strain SBW25).